The following is an 88-amino-acid chain: Small ribosomal subunit protein uS17 (88 aa).

It belongs to the universal ribosomal protein uS17 family. As to quaternary structure, part of the 30S ribosomal subunit.

Functionally, one of the primary rRNA binding proteins, it binds specifically to the 5'-end of 16S ribosomal RNA. This chain is Small ribosomal subunit protein uS17, found in Synechococcus sp. (strain WH7803).